Reading from the N-terminus, the 276-residue chain is Sulfur carrier protein FdhD (276 aa).

Cysteine 120 serves as the catalytic Cysteine persulfide intermediate.

Belongs to the FdhD family.

It localises to the cytoplasm. Its function is as follows. Required for formate dehydrogenase (FDH) activity. Acts as a sulfur carrier protein that transfers sulfur from IscS to the molybdenum cofactor prior to its insertion into FDH. The chain is Sulfur carrier protein FdhD from Bordetella bronchiseptica (strain ATCC BAA-588 / NCTC 13252 / RB50) (Alcaligenes bronchisepticus).